The sequence spans 389 residues: S-adenosylmethionine synthase (389 aa).

ATP is bound at residue histidine 15. Aspartate 17 is a Mg(2+) binding site. Position 43 (glutamate 43) interacts with K(+). Residues glutamate 56 and glutamine 99 each coordinate L-methionine. Residues 99–109 form a flexible loop region; the sequence is QSSDIQYSIDH. ATP-binding positions include 166–168, 232–233, aspartate 241, 247–248, serine 264, and lysine 268; these read DAK, RF, and RK. Aspartate 241 lines the L-methionine pocket. Lysine 272 contacts L-methionine.

This sequence belongs to the AdoMet synthase family. As to quaternary structure, homotetramer; dimer of dimers. The cofactor is Mg(2+). K(+) is required as a cofactor.

It localises to the cytoplasm. It carries out the reaction L-methionine + ATP + H2O = S-adenosyl-L-methionine + phosphate + diphosphate. It participates in amino-acid biosynthesis; S-adenosyl-L-methionine biosynthesis; S-adenosyl-L-methionine from L-methionine: step 1/1. Catalyzes the formation of S-adenosylmethionine (AdoMet) from methionine and ATP. The overall synthetic reaction is composed of two sequential steps, AdoMet formation and the subsequent tripolyphosphate hydrolysis which occurs prior to release of AdoMet from the enzyme. The sequence is that of S-adenosylmethionine synthase from Blochmanniella pennsylvanica (strain BPEN).